The following is a 207-amino-acid chain: Superoxide dismutase [Mn] (207 aa).

Histidine 28, histidine 76, aspartate 160, and histidine 164 together coordinate Mn(2+).

The protein belongs to the iron/manganese superoxide dismutase family. Requires Mn(2+) as cofactor.

The enzyme catalyses 2 superoxide + 2 H(+) = H2O2 + O2. Its function is as follows. Destroys superoxide anion radicals which are normally produced within the cells and which are toxic to biological systems. The polypeptide is Superoxide dismutase [Mn] (sodA) (Mycobacterium avium).